The following is a 66-amino-acid chain: Large ribosomal subunit protein bL35 (66 aa).

This sequence belongs to the bacterial ribosomal protein bL35 family.

In Acholeplasma laidlawii (strain PG-8A), this protein is Large ribosomal subunit protein bL35.